The sequence spans 140 residues: Nucleoside diphosphate kinase (140 aa).

ATP contacts are provided by Lys11, Phe59, Arg87, Thr93, Arg104, and Asn114. His117 functions as the Pros-phosphohistidine intermediate in the catalytic mechanism.

It belongs to the NDK family. In terms of assembly, homotetramer. Requires Mg(2+) as cofactor.

It localises to the cytoplasm. The catalysed reaction is a 2'-deoxyribonucleoside 5'-diphosphate + ATP = a 2'-deoxyribonucleoside 5'-triphosphate + ADP. It carries out the reaction a ribonucleoside 5'-diphosphate + ATP = a ribonucleoside 5'-triphosphate + ADP. In terms of biological role, major role in the synthesis of nucleoside triphosphates other than ATP. The ATP gamma phosphate is transferred to the NDP beta phosphate via a ping-pong mechanism, using a phosphorylated active-site intermediate. The polypeptide is Nucleoside diphosphate kinase (Roseobacter denitrificans (strain ATCC 33942 / OCh 114) (Erythrobacter sp. (strain OCh 114))).